The sequence spans 128 residues: Small ribosomal subunit protein uS11 (128 aa).

The protein belongs to the universal ribosomal protein uS11 family. Part of the 30S ribosomal subunit. Interacts with proteins S7 and S18. Binds to IF-3.

In terms of biological role, located on the platform of the 30S subunit, it bridges several disparate RNA helices of the 16S rRNA. Forms part of the Shine-Dalgarno cleft in the 70S ribosome. In Onion yellows phytoplasma (strain OY-M), this protein is Small ribosomal subunit protein uS11.